The primary structure comprises 77 residues: Acyl carrier protein (77 aa).

In terms of domain architecture, Carrier spans Met-1–Thr-75. Residue Ser-35 is modified to O-(pantetheine 4'-phosphoryl)serine.

It belongs to the acyl carrier protein (ACP) family. In terms of processing, 4'-phosphopantetheine is transferred from CoA to a specific serine of apo-ACP by AcpS. This modification is essential for activity because fatty acids are bound in thioester linkage to the sulfhydryl of the prosthetic group.

It is found in the cytoplasm. It participates in lipid metabolism; fatty acid biosynthesis. Carrier of the growing fatty acid chain in fatty acid biosynthesis. The chain is Acyl carrier protein from Clostridium acetobutylicum (strain ATCC 824 / DSM 792 / JCM 1419 / IAM 19013 / LMG 5710 / NBRC 13948 / NRRL B-527 / VKM B-1787 / 2291 / W).